The sequence spans 158 residues: Protein Smg homolog (158 aa).

This sequence belongs to the Smg family.

The protein is Protein Smg homolog of Shewanella oneidensis (strain ATCC 700550 / JCM 31522 / CIP 106686 / LMG 19005 / NCIMB 14063 / MR-1).